Here is a 426-residue protein sequence, read N- to C-terminus: MSSSILNELGWRGLVAQSTDLDALADELRRGPMTVYAGFDPTAPSLHVGHLVPLLVLRRFQRAGHRPIVLAGGATGMIGDPRDIGERTLNEAYTVAEWAERIRGQLERFVEFDDVAKSRNGAIVVNNLEWTSPMSAIEFLRDVGKHFSINLMLDRDTIRRRLNGQGISYTEFSYMLLQANDYAELHQRHGCALQIGGSDQWGNIIAGVRLVRQKLGATVHALTVPLVTAADGAKLGKSTGGGSLWLDPEMTSPYAWYQYFINTSDADVIRYLRWFTFLLPEELVELEQTTVSRPQERAAQRRLATELTVLVHGAAATQAVEHASRALFGQGELARLDEATLATALRETVVAELKPGNPDGIVDLLVASGLSPSRGAARRTIDEGGVLVNNIRIQSEEWTPRTSDFLHGRWLVLRRGKRNIAGIERV.

Residue Tyr-36 participates in L-tyrosine binding. Positions 41–50 (PTAPSLHVGH) match the 'HIGH' region motif. Tyr-174 and Gln-178 together coordinate L-tyrosine. The short motif at 234–238 (KLGKS) is the 'KMSKS' region element. Lys-237 contacts ATP. The S4 RNA-binding domain occupies 359-416 (DGIVDLLVASGLSPSRGAARRTIDEGGVLVNNIRIQSEEWTPRTSDFLHGRWLVLRRG).

The protein belongs to the class-I aminoacyl-tRNA synthetase family. TyrS type 1 subfamily. Homodimer.

It localises to the cytoplasm. It carries out the reaction tRNA(Tyr) + L-tyrosine + ATP = L-tyrosyl-tRNA(Tyr) + AMP + diphosphate + H(+). In terms of biological role, catalyzes the attachment of tyrosine to tRNA(Tyr) in a two-step reaction: tyrosine is first activated by ATP to form Tyr-AMP and then transferred to the acceptor end of tRNA(Tyr). The sequence is that of Tyrosine--tRNA ligase from Mycobacterium leprae (strain TN).